Here is a 295-residue protein sequence, read N- to C-terminus: Ribosomal protein L11 methyltransferase (295 aa).

S-adenosyl-L-methionine is bound by residues Thr-145, Gly-166, Asp-188, and Asn-230.

Belongs to the methyltransferase superfamily. PrmA family.

Its subcellular location is the cytoplasm. It catalyses the reaction L-lysyl-[protein] + 3 S-adenosyl-L-methionine = N(6),N(6),N(6)-trimethyl-L-lysyl-[protein] + 3 S-adenosyl-L-homocysteine + 3 H(+). Its function is as follows. Methylates ribosomal protein L11. This Pectobacterium atrosepticum (strain SCRI 1043 / ATCC BAA-672) (Erwinia carotovora subsp. atroseptica) protein is Ribosomal protein L11 methyltransferase.